We begin with the raw amino-acid sequence, 123 residues long: Small ribosomal subunit protein uS12 (123 aa).

Residues 1–24 form a disordered region; the sequence is MPTINQLVRKGRTPQKVKSKVPAM. Residues 9–19 are compositionally biased toward basic residues; the sequence is RKGRTPQKVKS. Residue Asp89 is modified to 3-methylthioaspartic acid.

It belongs to the universal ribosomal protein uS12 family. As to quaternary structure, part of the 30S ribosomal subunit. Contacts proteins S8 and S17. May interact with IF1 in the 30S initiation complex.

With S4 and S5 plays an important role in translational accuracy. Functionally, interacts with and stabilizes bases of the 16S rRNA that are involved in tRNA selection in the A site and with the mRNA backbone. Located at the interface of the 30S and 50S subunits, it traverses the body of the 30S subunit contacting proteins on the other side and probably holding the rRNA structure together. The combined cluster of proteins S8, S12 and S17 appears to hold together the shoulder and platform of the 30S subunit. This chain is Small ribosomal subunit protein uS12, found in Sphingopyxis alaskensis (strain DSM 13593 / LMG 18877 / RB2256) (Sphingomonas alaskensis).